Reading from the N-terminus, the 267-residue chain is Formamidopyrimidine-DNA glycosylase (267 aa).

The active-site Schiff-base intermediate with DNA is the Pro2. The active-site Proton donor is the Glu3. The active-site Proton donor; for beta-elimination activity is the Lys58. Residues His91, Arg110, and Arg152 each coordinate DNA. The FPG-type zinc finger occupies 233-267; the sequence is DVYGRGHGTCTSCGGALEAVRLGNRSTVFCPRCQQ. The active-site Proton donor; for delta-elimination activity is Arg257.

This sequence belongs to the FPG family. In terms of assembly, monomer. Requires Zn(2+) as cofactor.

It carries out the reaction Hydrolysis of DNA containing ring-opened 7-methylguanine residues, releasing 2,6-diamino-4-hydroxy-5-(N-methyl)formamidopyrimidine.. The catalysed reaction is 2'-deoxyribonucleotide-(2'-deoxyribose 5'-phosphate)-2'-deoxyribonucleotide-DNA = a 3'-end 2'-deoxyribonucleotide-(2,3-dehydro-2,3-deoxyribose 5'-phosphate)-DNA + a 5'-end 5'-phospho-2'-deoxyribonucleoside-DNA + H(+). Involved in base excision repair of DNA damaged by oxidation or by mutagenic agents. Acts as a DNA glycosylase that recognizes and removes damaged bases. Has a preference for oxidized purines, such as 7,8-dihydro-8-oxoguanine (8-oxoG). Has AP (apurinic/apyrimidinic) lyase activity and introduces nicks in the DNA strand. Cleaves the DNA backbone by beta-delta elimination to generate a single-strand break at the site of the removed base with both 3'- and 5'-phosphates. This is Formamidopyrimidine-DNA glycosylase from Pelobacter propionicus (strain DSM 2379 / NBRC 103807 / OttBd1).